Reading from the N-terminus, the 384-residue chain is Deoxyguanosinetriphosphate triphosphohydrolase-like protein (384 aa).

Positions 62-198 (RLTHSLEVST…AALADDISYI (137 aa)) constitute an HD domain.

The protein belongs to the dGTPase family. Type 2 subfamily.

In Rickettsia peacockii (strain Rustic), this protein is Deoxyguanosinetriphosphate triphosphohydrolase-like protein.